The sequence spans 482 residues: MPSFWTQISGPRLYGIFGQPNRQEPTLENLGNTVISFSAGIYYIASSLAFGPVILCYLYSRDWLTPAGMLTILKYAGYLTLIGYGARTFGRLFDETNSRFLDIWENEKNKKDDNSHAALKKYDFELLDVIPDFVARPNSDLWHLKPEVAEAGVVTRGLASWAIHAFGRHLIYPGSMALLKYMMRPNLNAARKLLVQNKNGQRLWIKSSEGDTLDAMFLRGTNQSQDLIICFEGNAGFYEIGVMNSPAQLGYTTLGFNLPGFGESTGLPYAVNTLAAADAVMQYAIQVLGYRQENIVLFGWSIGGFPVAWLASNYPNVKAVVLDATFDDLLPLALFRMPTFFSTIVEHAIRNHMNLQIDKLLARYKGPIRLIRRLQEEILTTAVDDQPENVRRATNRINWLLKSIIKDRHPELIQNLEPQVDRWLDMTPTERLMHSGVSLREESTQRKRLFDACNHYLIDFDANHVTPLDPQYFNIPHGRDTF.

The AB hydrolase-1 domain occupies 231–459 (FEGNAGFYEI…FDACNHYLID (229 aa)).

This is an uncharacterized protein from Caenorhabditis elegans.